The following is a 497-amino-acid chain: Cytochrome P450 monooxygenase opdB (497 aa).

Residues 26–46 (YLGAMAGSVILLISAFTLSLG) form a helical membrane-spanning segment. Positions 69-90 (MSKFTRSRELSQQGEDAAGTEP) are disordered. Cysteine 454 provides a ligand contact to heme.

Heme is required as a cofactor.

It localises to the membrane. Its pathway is secondary metabolite biosynthesis. In terms of biological role, cytochrome P450 monooxygenase; part of the gene cluster that mediates the biosynthesis of oxopyrrolidines, polyketide-amino acid hybrid compounds with feature structures of tetramic acid. Does not seem to play a role in oxopyrrolidines A and B biosynthesis. May be involved in further modifications of these oxopyrrolidines. The protein is Cytochrome P450 monooxygenase opdB of Penicillium oxalicum (strain 114-2 / CGMCC 5302) (Penicillium decumbens).